The following is a 267-amino-acid chain: MQKDTIKIAIAGPRGRMGSEAVKLVEDTAHFELVGAIDRTYNREKLSDVMTSSSDAVIYTDITECFSETSPDVLIDLTTPEIGKLHTKIALEHGVRPVVGTTGFSESDLNELMELTDEKGIGAIIAPNFALGAVLMMKFSQMAANYFTDVEIIEQHHDQKLDAPSGTALKTAEMISAVREAKTQGHPDEKEILPGARGADQNGIRLHSVRLPGLIAHQEVMFGGDGQTLKIRHDSYNRASFMSGVKLAVEQVMKIDQLVYGLENIIE.

Residues 12 to 17, 100 to 102, and 126 to 129 each bind NAD(+); these read GPRGRM, GTT, and APNF. The active-site Proton donor/acceptor is His156. His157 contributes to the (S)-2,3,4,5-tetrahydrodipicolinate binding site. Lys160 (proton donor) is an active-site residue. Position 166 to 167 (166 to 167) interacts with (S)-2,3,4,5-tetrahydrodipicolinate; the sequence is GT.

This sequence belongs to the DapB family.

It is found in the cytoplasm. It carries out the reaction (S)-2,3,4,5-tetrahydrodipicolinate + NAD(+) + H2O = (2S,4S)-4-hydroxy-2,3,4,5-tetrahydrodipicolinate + NADH + H(+). The catalysed reaction is (S)-2,3,4,5-tetrahydrodipicolinate + NADP(+) + H2O = (2S,4S)-4-hydroxy-2,3,4,5-tetrahydrodipicolinate + NADPH + H(+). It participates in amino-acid biosynthesis; L-lysine biosynthesis via DAP pathway; (S)-tetrahydrodipicolinate from L-aspartate: step 4/4. Catalyzes the conversion of 4-hydroxy-tetrahydrodipicolinate (HTPA) to tetrahydrodipicolinate. The sequence is that of 4-hydroxy-tetrahydrodipicolinate reductase from Bacillus licheniformis (strain ATCC 14580 / DSM 13 / JCM 2505 / CCUG 7422 / NBRC 12200 / NCIMB 9375 / NCTC 10341 / NRRL NRS-1264 / Gibson 46).